A 100-amino-acid chain; its full sequence is Large ribosomal subunit protein uL23 (100 aa).

This sequence belongs to the universal ribosomal protein uL23 family. In terms of assembly, part of the 50S ribosomal subunit. Contacts protein L29, and trigger factor when it is bound to the ribosome.

Functionally, one of the early assembly proteins it binds 23S rRNA. One of the proteins that surrounds the polypeptide exit tunnel on the outside of the ribosome. Forms the main docking site for trigger factor binding to the ribosome. The chain is Large ribosomal subunit protein uL23 from Yersinia enterocolitica serotype O:8 / biotype 1B (strain NCTC 13174 / 8081).